A 447-amino-acid chain; its full sequence is UDP-glycosyltransferase 79B10 (447 aa).

UDP-alpha-D-glucose-binding positions include Ser260, 319-321 (VQQ), 336-344 (HCGFGSMWE), and 358-361 (LADQ).

Belongs to the UDP-glycosyltransferase family.

The sequence is that of UDP-glycosyltransferase 79B10 (UGT79B10) from Arabidopsis thaliana (Mouse-ear cress).